Consider the following 177-residue polypeptide: Ribosome maturation factor RimM (177 aa).

The 80-residue stretch at 98–177 (DDGYYWKDLM…TIEVDWDPGF (80 aa)) folds into the PRC barrel domain.

The protein belongs to the RimM family. In terms of assembly, binds ribosomal protein uS19.

It is found in the cytoplasm. An accessory protein needed during the final step in the assembly of 30S ribosomal subunit, possibly for assembly of the head region. Essential for efficient processing of 16S rRNA. May be needed both before and after RbfA during the maturation of 16S rRNA. It has affinity for free ribosomal 30S subunits but not for 70S ribosomes. The sequence is that of Ribosome maturation factor RimM from Enterobacter sp. (strain 638).